Reading from the N-terminus, the 364-residue chain is Melatonin receptor type 1B (364 aa).

The Extracellular portion of the chain corresponds to 1-42; sequence MPENSSIPNCCEASGLAARPSWSGSAGARPPVTARAPWVAPM. Asn-4 is a glycosylation site (N-linked (GlcNAc...) asparagine). The helical transmembrane segment at 43–63 threads the bilayer; sequence LSTVVVVTTAVDFVGNLLVIL. The Cytoplasmic portion of the chain corresponds to 64–76; the sequence is SVLRNRKLRNAGN. The helical transmembrane segment at 77 to 97 threads the bilayer; that stretch reads LFVVSLALADLVIALYPYPLI. Topologically, residues 98-115 are extracellular; that stretch reads LVAIIRDGWVLGEAHCKA. Cysteines 113 and 190 form a disulfide. A helical membrane pass occupies residues 116-136; it reads SAFVMGLSVIGSVFNITAIAI. Over 137 to 155 the chain is Cytoplasmic; that stretch reads NRYCCICHSTTYHRVCSHW. Residues 156 to 176 form a helical membrane-spanning segment; sequence YTPIYISLVWLLTLVALVPNF. The Extracellular portion of the chain corresponds to 177 to 200; sequence FVGSLEYDPRIYSCTFIQTASTQY. The chain crosses the membrane as a helical span at residues 201–221; that stretch reads TAAVVAIHFLLPMAVVSFCYL. Topologically, residues 222–253 are cytoplasmic; sequence RIWVLVLQARRKAKATRKLRLRPSDLRSFLTM. The chain crosses the membrane as a helical span at residues 254 to 274; that stretch reads FAVFVVFAICWAPLNCIGLAV. At 275-287 the chain is on the extracellular side; it reads AINPEAMALQVPE. The helical transmembrane segment at 288-308 threads the bilayer; it reads GLFVTSYFLAYFNSCLNAIVY. Residues 309 to 364 are Cytoplasmic-facing; sequence GLLNQNFRREYKRILLAIWNTRRCIQHASKHCLTEERQGPTPPAARATVPVKEGAL. Residues 343–364 are disordered; the sequence is EERQGPTPPAARATVPVKEGAL. Residues 352 to 364 show a composition bias toward low complexity; that stretch reads AARATVPVKEGAL.

Belongs to the G-protein coupled receptor 1 family.

It is found in the cell membrane. Its function is as follows. High affinity receptor for melatonin. The activity of this receptor is mediated by pertussis toxin sensitive G proteins that inhibits adenylate cyclase activity. The sequence is that of Melatonin receptor type 1B (Mtnr1b) from Mus musculus (Mouse).